A 162-amino-acid chain; its full sequence is Phosphopantetheine adenylyltransferase (162 aa).

Substrate is bound at residue Thr-14. ATP contacts are provided by residues 14–15 and His-22; that span reads TF. 3 residues coordinate substrate: Lys-46, Leu-78, and Arg-92. ATP is bound by residues 93 to 95, Glu-103, and 128 to 134; these read GLR and HSFISSS.

The protein belongs to the bacterial CoaD family. Homohexamer. Mg(2+) is required as a cofactor.

The protein localises to the cytoplasm. It catalyses the reaction (R)-4'-phosphopantetheine + ATP + H(+) = 3'-dephospho-CoA + diphosphate. The protein operates within cofactor biosynthesis; coenzyme A biosynthesis; CoA from (R)-pantothenate: step 4/5. Its function is as follows. Reversibly transfers an adenylyl group from ATP to 4'-phosphopantetheine, yielding dephospho-CoA (dPCoA) and pyrophosphate. The protein is Phosphopantetheine adenylyltransferase of Xylella fastidiosa (strain 9a5c).